The sequence spans 55 residues: DNA-binding protein (55 aa).

Residues 1 to 55 form a disordered region; sequence MVYRRRRRSSTGTTYGSTRRRRSSGYRRRPGRPRTYRRSRSRSSTGRRSYRTRYY. 2 tandem repeats follow at residues 5-10 and 19-24. Residues 5-24 form a 2 X 6 AA repeats of R-R-R-R-S-S region; it reads RRRRSSTGTTYGSTRRRRSS. The span at 18–41 shows a compositional bias: basic residues; sequence TRRRRSSGYRRRPGRPRTYRRSRS.

In terms of assembly, interacts with protein AC132. Post-translationally, phosphorylated.

Its subcellular location is the virion. It localises to the host cytoplasm. Its function is as follows. Plays a role in viral DNA packaging and nucleocapsid assembly. Promotes viral gene transcription during the late stage of infection while it is non-essential for the basal level of viral gene transcription. The polypeptide is DNA-binding protein (P6.9) (Lepidoptera (butterflies and moths)).